The primary structure comprises 580 residues: F-box only protein 24 (580 aa).

Residues 36 to 82 form the F-box domain; sequence PISIQLFPPELVEHIISFLPVRDLVALGQTCRYFHEVCDAEGVWRRI. The RCC1 repeat unit spans residues 376 to 425; it reads GRIFMQGNNRYGQLGTGDKMDRGEPTQVRYLQRPITLWCGLNHSLVLSQS.

Directly interacts with SKP1 and CUL1.

Substrate-recognition component of the SCF (SKP1-CUL1-F-box protein)-type E3 ubiquitin ligase complex. The sequence is that of F-box only protein 24 (FBXO24) from Macaca fascicularis (Crab-eating macaque).